A 104-amino-acid chain; its full sequence is Large ribosomal subunit protein bL21 (104 aa).

This sequence belongs to the bacterial ribosomal protein bL21 family. In terms of assembly, part of the 50S ribosomal subunit. Contacts protein L20.

Its function is as follows. This protein binds to 23S rRNA in the presence of protein L20. The polypeptide is Large ribosomal subunit protein bL21 (Francisella philomiragia subsp. philomiragia (strain ATCC 25017 / CCUG 19701 / FSC 153 / O#319-036)).